We begin with the raw amino-acid sequence, 303 residues long: Glycine--tRNA ligase alpha subunit (303 aa).

Belongs to the class-II aminoacyl-tRNA synthetase family. As to quaternary structure, tetramer of two alpha and two beta subunits.

The protein localises to the cytoplasm. The catalysed reaction is tRNA(Gly) + glycine + ATP = glycyl-tRNA(Gly) + AMP + diphosphate. This is Glycine--tRNA ligase alpha subunit from Stenotrophomonas maltophilia (strain K279a).